A 220-amino-acid polypeptide reads, in one-letter code: Vesicle-associated protein 2-1 (220 aa).

M1 is subject to N-acetylmethionine. At 1-196 the chain is on the cytoplasmic side; it reads MTGVGENQLI…RNSGNGLSLK (196 aa). At T2 the chain carries N-acetylthreonine; in Vesicle-associated protein 2-1, N-terminally processed. In terms of domain architecture, MSP spans 9–129; that stretch reads LISIQPDELK…TECKLKVSYI (121 aa). The disordered stretch occupies residues 133-154; it reads TTQRSSESGATNGDGQSSETIS. Positions 153–188 form a coiled coil; the sequence is ISTIQRLKEERDAAVKQTQQLQHELETVRRRRNQRN. Residues 197–217 form a helical; Anchor for type IV membrane protein membrane-spanning segment; it reads LAAMVGLIGLIIGFILKLTLA.

This sequence belongs to the VAMP-associated protein (VAP) (TC 9.B.17) family.

Its subcellular location is the endoplasmic reticulum membrane. Functionally, may play a role in vesicle trafficking. In Arabidopsis thaliana (Mouse-ear cress), this protein is Vesicle-associated protein 2-1 (PVA21).